We begin with the raw amino-acid sequence, 636 residues long: 1-deoxy-D-xylulose-5-phosphate synthase (636 aa).

Residues His84 and Gly125–Ser127 contribute to the thiamine diphosphate site. A Mg(2+)-binding site is contributed by Asp156. Residues Gly157–Ala158, Asn185, Phe292, and Glu375 each bind thiamine diphosphate. A Mg(2+)-binding site is contributed by Asn185.

This sequence belongs to the transketolase family. DXPS subfamily. In terms of assembly, homodimer. Mg(2+) serves as cofactor. The cofactor is thiamine diphosphate.

It carries out the reaction D-glyceraldehyde 3-phosphate + pyruvate + H(+) = 1-deoxy-D-xylulose 5-phosphate + CO2. It functions in the pathway metabolic intermediate biosynthesis; 1-deoxy-D-xylulose 5-phosphate biosynthesis; 1-deoxy-D-xylulose 5-phosphate from D-glyceraldehyde 3-phosphate and pyruvate: step 1/1. Catalyzes the acyloin condensation reaction between C atoms 2 and 3 of pyruvate and glyceraldehyde 3-phosphate to yield 1-deoxy-D-xylulose-5-phosphate (DXP). The polypeptide is 1-deoxy-D-xylulose-5-phosphate synthase (Cellvibrio japonicus (strain Ueda107) (Pseudomonas fluorescens subsp. cellulosa)).